The primary structure comprises 146 residues: Ribosome-binding factor A (146 aa).

A compositionally biased stretch (polar residues) spans 122–134 (QQQFGSAEDVTSN). A disordered region spans residues 122 to 146 (QQQFGSAEDVTSNDIDEADDTEGKA). Over residues 135–146 (DIDEADDTEGKA) the composition is skewed to acidic residues.

The protein belongs to the RbfA family. Monomer. Binds 30S ribosomal subunits, but not 50S ribosomal subunits or 70S ribosomes.

It is found in the cytoplasm. Its function is as follows. One of several proteins that assist in the late maturation steps of the functional core of the 30S ribosomal subunit. Associates with free 30S ribosomal subunits (but not with 30S subunits that are part of 70S ribosomes or polysomes). Required for efficient processing of 16S rRNA. May interact with the 5'-terminal helix region of 16S rRNA. This Shewanella sp. (strain ANA-3) protein is Ribosome-binding factor A.